Reading from the N-terminus, the 311-residue chain is GTP cyclohydrolase MptA (311 aa).

Belongs to the GTP cyclohydrolase IV family. As to quaternary structure, homodimer. It depends on Fe(2+) as a cofactor.

The enzyme catalyses GTP + H2O = 7,8-dihydroneopterin 2',3'-cyclic phosphate + formate + diphosphate + H(+). The protein operates within cofactor biosynthesis; 5,6,7,8-tetrahydromethanopterin biosynthesis. Functionally, converts GTP to 7,8-dihydro-D-neopterin 2',3'-cyclic phosphate, the first intermediate in the biosynthesis of coenzyme methanopterin. This is GTP cyclohydrolase MptA from Methanocorpusculum labreanum (strain ATCC 43576 / DSM 4855 / Z).